Here is a 141-residue protein sequence, read N- to C-terminus: Hemoglobin subunit alpha (141 aa).

A Globin domain is found at 1–141; that stretch reads VLSAEDKANV…VSTVLTSKYR (141 aa). Position 3 is a phosphoserine (Ser-3). Lys-7 and Lys-11 each carry N6-succinyllysine. Lys-16 carries the post-translational modification N6-acetyllysine; alternate. N6-succinyllysine; alternate is present on Lys-16. A Phosphotyrosine modification is found at Tyr-24. Position 35 is a phosphoserine (Ser-35). Lys-40 carries the N6-succinyllysine modification. At Ser-49 the chain carries Phosphoserine. His-58 contacts O2. A heme b-binding site is contributed by His-87. Ser-102 bears the Phosphoserine mark. Thr-108 bears the Phosphothreonine mark. Phosphoserine is present on residues Ser-124 and Ser-131. Thr-134 and Thr-137 each carry phosphothreonine. A Phosphoserine modification is found at Ser-138.

It belongs to the globin family. Heterotetramer of two alpha chains and two beta chains. Red blood cells.

Its function is as follows. Involved in oxygen transport from the lung to the various peripheral tissues. In Peromyscus crinitus (Canyon mouse), this protein is Hemoglobin subunit alpha.